A 115-amino-acid polypeptide reads, in one-letter code: MSNIIKQIEDEQMKQDVPAFRPGDTVEVKVWVVEGSKKRLQAFEGVVIAIRNRGLHSAFTVRKISNGEGVERVFQTHSPVVDSIAVKRRGAVRKAKLYYLRERTGKSARIKERLN.

This sequence belongs to the bacterial ribosomal protein bL19 family.

Its function is as follows. This protein is located at the 30S-50S ribosomal subunit interface and may play a role in the structure and function of the aminoacyl-tRNA binding site. This chain is Large ribosomal subunit protein bL19, found in Pectobacterium carotovorum subsp. carotovorum (strain PC1).